The chain runs to 30 residues: Propionyl-CoA carboxylase alpha chain (30 aa).

Residues 1 to 30 (PKIRKVLVANRGEIAIRVMRTXKELGIATV) form the Biotin carboxylation domain.

Dodecamer composed of six biotin-containing alpha subunits and six beta subunits. Mg(2+) serves as cofactor. The cofactor is Mn(2+). Requires biotin as cofactor.

The enzyme catalyses propanoyl-CoA + hydrogencarbonate + ATP = (S)-methylmalonyl-CoA + ADP + phosphate + H(+). It participates in metabolic intermediate metabolism; propanoyl-CoA degradation; succinyl-CoA from propanoyl-CoA: step 1/3. This is one of the 2 subunits of the biotin-dependent propionyl-CoA carboxylase (PCC), the enzyme catalyzing the carboxylation of propionyl-CoA/propanoyl-CoA to D-methylmalonyl-CoA/(S)-methylmalonyl-CoA. Within the holoenzyme, the alpha subunit catalyzes the ATP-dependent carboxylation of the biotin carried by the biotin carboxyl carrier (BCC) domain, while the beta subunit then transfers the carboxyl group from carboxylated biotin to propionyl-CoA. Propionyl-CoA carboxylase also carboxylates acetyl-CoA, butyryl-CoA and succinyl-CoA. The sequence is that of Propionyl-CoA carboxylase alpha chain from Myxococcus xanthus.